Reading from the N-terminus, the 337-residue chain is Mating-type protein MAT-2 (337 aa).

The segment at residues 125 to 193 is a DNA-binding region (HMG box); the sequence is APRPMNCWII…EHLRQHPNYK (69 aa). The segment at 171–219 is disordered; it reads KRPWQDAAQSAKEEHLRQHPNYKYTPRKPGEKKKRQSRKSKRAAATTTA. Basic residues predominate over residues 200-212; that stretch reads GEKKKRQSRKSKR.

Its subcellular location is the nucleus. This Cochliobolus sativus (Common root rot and spot blotch fungus) protein is Mating-type protein MAT-2 (MAT2).